Here is a 510-residue protein sequence, read N- to C-terminus: Zinc finger protein 692 (510 aa).

Disordered regions lie at residues 1–20 (MAASPADASRRRREKRRQLD) and 121–306 (WGPS…EDTA). S161 is subject to Phosphoserine. The span at 163 to 172 (CDERAQEARM) shows a compositional bias: basic and acidic residues. Over residues 188-201 (EDGEEEEEDEEEML) the composition is skewed to acidic residues. Residue S225 is modified to Phosphoserine. A compositionally biased stretch (low complexity) spans 237–265 (APAPAAVPAPLASPSSSASSLGSGAPGPV). Positions 278–297 (QADQQTEPLASPGSQAQSAL) are enriched in polar residues. 5 consecutive C2H2-type zinc fingers follow at residues 322 to 347 (LPCDFPGCGRIFSNRQYLNHHKKYQH), 353 to 377 (FSCPEPACGKSFNFKKHLKEHVKLH), 383 to 405 (YICEFCARSFRTSSNLVIHRRIH), 411 to 433 (LQCEICGFTCRQKASLNWHRRKH), and 442 to 465 (FPCEFCGKRFEKPDSVAAHRSKSH). S464 bears the Phosphoserine mark.

This sequence belongs to the krueppel C2H2-type zinc-finger protein family. In terms of processing, phosphorylation at Ser-464 results in loss of DNA-binding activity.

It localises to the nucleus. May act as an transcriptional repressor for PCK1 gene expression, in turn may participate in the hepatic gluconeogenesis regulation through the activated AMPK signaling pathway. This chain is Zinc finger protein 692, found in Bos taurus (Bovine).